Consider the following 347-residue polypeptide: Selenide, water dikinase (347 aa).

The active site involves C17. ATP is bound by residues K20 and 48-50; that span reads TRD. Residue D51 coordinates Mg(2+). ATP is bound by residues D68, D91, and 139-141; that span reads GHS. D91 contributes to the Mg(2+) binding site. A Mg(2+)-binding site is contributed by D227.

It belongs to the selenophosphate synthase 1 family. Class I subfamily. As to quaternary structure, homodimer. Requires Mg(2+) as cofactor.

The enzyme catalyses hydrogenselenide + ATP + H2O = selenophosphate + AMP + phosphate + 2 H(+). Synthesizes selenophosphate from selenide and ATP. In Escherichia coli O9:H4 (strain HS), this protein is Selenide, water dikinase.